Reading from the N-terminus, the 297-residue chain is Calponin-1 (297 aa).

Residues 28–131 enclose the Calponin-homology (CH) domain; that stretch reads HQREQELREW…STLLALASMA (104 aa). Calponin-like repeat units lie at residues 164–189, 204–229, and 243–268; these read IGLQ…RHLY, ISLQ…RQIF, and VSLQ…RQVY. Residue Thr170 is modified to Phosphothreonine; by ROCK2. At Ser175 the chain carries Phosphoserine; by ROCK2. Phosphothreonine; by ROCK2 is present on residues Thr180 and Thr184. Thr259 carries the post-translational modification Phosphothreonine; by ROCK2.

The protein belongs to the calponin family. In terms of assembly, part of cGMP kinase signaling complex at least composed of ACTA2/alpha-actin, CNN1/calponin H1, PLN/phospholamban, PRKG1 and ITPR1.

Functionally, thin filament-associated protein that is implicated in the regulation and modulation of smooth muscle contraction. It is capable of binding to actin, calmodulin and tropomyosin. The interaction of calponin with actin inhibits the actomyosin Mg-ATPase activity. The chain is Calponin-1 (CNN1) from Ovis aries (Sheep).